A 223-amino-acid chain; its full sequence is Cytidylate kinase (223 aa).

The segment at 1–23 (MSTSPLVIAIDGPSGSGKSSTSR) is disordered. 12–20 (GPSGSGKSS) is an ATP binding site.

This sequence belongs to the cytidylate kinase family. Type 1 subfamily.

Its subcellular location is the cytoplasm. The catalysed reaction is CMP + ATP = CDP + ADP. It carries out the reaction dCMP + ATP = dCDP + ADP. This is Cytidylate kinase from Cutibacterium acnes (strain DSM 16379 / KPA171202) (Propionibacterium acnes).